Consider the following 375-residue polypeptide: Chaperone protein DnaJ (375 aa).

Positions 4 to 68 constitute a J domain; that stretch reads DYYEILGVSR…ETRARYDRFG (65 aa). A CR-type zinc finger spans residues 134–216; it reads GGEKEIRIRH…CGGSGRKQET (83 aa). The Zn(2+) site is built by C147, C150, C164, C167, C190, C193, C204, and C207. CXXCXGXG motif repeat units lie at residues 147-154, 164-171, 190-197, and 204-211; these read CQVCEGSG, CSTCSGSG, CPTCNGSG, and CEACGGSG.

It belongs to the DnaJ family. As to quaternary structure, homodimer. It depends on Zn(2+) as a cofactor.

Its subcellular location is the cytoplasm. Participates actively in the response to hyperosmotic and heat shock by preventing the aggregation of stress-denatured proteins and by disaggregating proteins, also in an autonomous, DnaK-independent fashion. Unfolded proteins bind initially to DnaJ; upon interaction with the DnaJ-bound protein, DnaK hydrolyzes its bound ATP, resulting in the formation of a stable complex. GrpE releases ADP from DnaK; ATP binding to DnaK triggers the release of the substrate protein, thus completing the reaction cycle. Several rounds of ATP-dependent interactions between DnaJ, DnaK and GrpE are required for fully efficient folding. Also involved, together with DnaK and GrpE, in the DNA replication of plasmids through activation of initiation proteins. The polypeptide is Chaperone protein DnaJ (Gloeothece citriformis (strain PCC 7424) (Cyanothece sp. (strain PCC 7424))).